Here is a 124-residue protein sequence, read N- to C-terminus: S-adenosylmethionine decarboxylase proenzyme (124 aa).

The active-site Schiff-base intermediate with substrate; via pyruvic acid is serine 63. Serine 63 carries the post-translational modification Pyruvic acid (Ser); by autocatalysis. Histidine 68 (proton acceptor; for processing activity) is an active-site residue. Cysteine 83 serves as the catalytic Proton donor; for catalytic activity.

This sequence belongs to the prokaryotic AdoMetDC family. Type 1 subfamily. As to quaternary structure, heterotetramer of two alpha and two beta chains arranged as a dimer of alpha/beta heterodimers. Pyruvate is required as a cofactor. Post-translationally, is synthesized initially as an inactive proenzyme. Formation of the active enzyme involves a self-maturation process in which the active site pyruvoyl group is generated from an internal serine residue via an autocatalytic post-translational modification. Two non-identical subunits are generated from the proenzyme in this reaction, and the pyruvate is formed at the N-terminus of the alpha chain, which is derived from the carboxyl end of the proenzyme. The post-translation cleavage follows an unusual pathway, termed non-hydrolytic serinolysis, in which the side chain hydroxyl group of the serine supplies its oxygen atom to form the C-terminus of the beta chain, while the remainder of the serine residue undergoes an oxidative deamination to produce ammonia and the pyruvoyl group blocking the N-terminus of the alpha chain.

It catalyses the reaction S-adenosyl-L-methionine + H(+) = S-adenosyl 3-(methylsulfanyl)propylamine + CO2. Its pathway is amine and polyamine biosynthesis; S-adenosylmethioninamine biosynthesis; S-adenosylmethioninamine from S-adenosyl-L-methionine: step 1/1. Functionally, catalyzes the decarboxylation of S-adenosylmethionine to S-adenosylmethioninamine (dcAdoMet), the propylamine donor required for the synthesis of the polyamines spermine and spermidine from the diamine putrescine. The polypeptide is S-adenosylmethionine decarboxylase proenzyme (Acetivibrio thermocellus (strain ATCC 27405 / DSM 1237 / JCM 9322 / NBRC 103400 / NCIMB 10682 / NRRL B-4536 / VPI 7372) (Clostridium thermocellum)).